The chain runs to 1045 residues: Probable beta-glucosidase E (1045 aa).

Residues 1–74 (MAPPDSTHGG…SGSYQLRPVD (74 aa)) are disordered. Topologically, residues 1–163 (MAPPDSTHGG…PVKYARIWWR (163 aa)) are cytoplasmic. Residues 11 to 20 (SFRDHLKTND) are compositionally biased toward basic and acidic residues. Residues 164 to 184 (TLLAVIVTLAVVVWGFLSFAV) traverse the membrane as a helical; Signal-anchor for type II membrane protein segment. Over 185 to 1045 (SHREEPKVWP…SRDLPLMGEY (861 aa)) the chain is Extracellular. Residues Asn-226, Asn-234, and Asn-402 are each glycosylated (N-linked (GlcNAc...) asparagine). The active site involves Asp-430. Residues Asn-473, Asn-512, Asn-577, Asn-893, Asn-902, and Asn-988 are each glycosylated (N-linked (GlcNAc...) asparagine).

It belongs to the glycosyl hydrolase 3 family.

Its subcellular location is the cell membrane. The catalysed reaction is Hydrolysis of terminal, non-reducing beta-D-glucosyl residues with release of beta-D-glucose.. Its pathway is glycan metabolism; cellulose degradation. In terms of biological role, beta-glucosidases are one of a number of cellulolytic enzymes involved in the degradation of cellulosic biomass. Catalyzes the last step releasing glucose from the inhibitory cellobiose. The polypeptide is Probable beta-glucosidase E (bglE) (Neosartorya fischeri (strain ATCC 1020 / DSM 3700 / CBS 544.65 / FGSC A1164 / JCM 1740 / NRRL 181 / WB 181) (Aspergillus fischerianus)).